Consider the following 339-residue polypeptide: Glycerol-3-phosphate dehydrogenase [NAD(P)+] (339 aa).

Residues serine 31, tryptophan 32, arginine 52, and lysine 122 each coordinate NADPH. 2 residues coordinate sn-glycerol 3-phosphate: lysine 122 and glycine 152. Residue alanine 156 participates in NADPH binding. The sn-glycerol 3-phosphate site is built by lysine 207, aspartate 260, serine 270, arginine 271, and asparagine 272. Lysine 207 acts as the Proton acceptor in catalysis. Arginine 271 lines the NADPH pocket. Glutamate 293 is a binding site for NADPH.

The protein belongs to the NAD-dependent glycerol-3-phosphate dehydrogenase family.

It is found in the cytoplasm. It carries out the reaction sn-glycerol 3-phosphate + NAD(+) = dihydroxyacetone phosphate + NADH + H(+). The catalysed reaction is sn-glycerol 3-phosphate + NADP(+) = dihydroxyacetone phosphate + NADPH + H(+). It functions in the pathway membrane lipid metabolism; glycerophospholipid metabolism. In terms of biological role, catalyzes the reduction of the glycolytic intermediate dihydroxyacetone phosphate (DHAP) to sn-glycerol 3-phosphate (G3P), the key precursor for phospholipid synthesis. This chain is Glycerol-3-phosphate dehydrogenase [NAD(P)+], found in Tropheryma whipplei (strain Twist) (Whipple's bacillus).